A 176-amino-acid chain; its full sequence is Inorganic pyrophosphatase (176 aa).

Substrate-binding residues include Lys30, Arg44, and Tyr56. Mg(2+) is bound by residues Asp66, Asp71, and Asp103. Tyr142 is a substrate binding site.

This sequence belongs to the PPase family. Homohexamer. It depends on Mg(2+) as a cofactor.

The protein resides in the cytoplasm. The enzyme catalyses diphosphate + H2O = 2 phosphate + H(+). Its function is as follows. Catalyzes the hydrolysis of inorganic pyrophosphate (PPi) forming two phosphate ions. The polypeptide is Inorganic pyrophosphatase (Aeropyrum pernix (strain ATCC 700893 / DSM 11879 / JCM 9820 / NBRC 100138 / K1)).